A 126-amino-acid polypeptide reads, in one-letter code: Small ribosomal subunit protein uS13c (126 aa).

The disordered stretch occupies residues 95–126 (GLPLRGQNTRTNARTKRGIKKTMAGKKKAPRK). Positions 107–126 (ARTKRGIKKTMAGKKKAPRK) are enriched in basic residues.

The protein belongs to the universal ribosomal protein uS13 family. In terms of assembly, part of the 30S ribosomal subunit.

Its subcellular location is the plastid. It localises to the chloroplast. Located at the top of the head of the 30S subunit, it contacts several helices of the 16S rRNA. This chain is Small ribosomal subunit protein uS13c, found in Gracilaria tenuistipitata var. liui (Red alga).